The primary structure comprises 118 residues: Large ribosomal subunit protein bL20 (118 aa).

The protein belongs to the bacterial ribosomal protein bL20 family.

Its function is as follows. Binds directly to 23S ribosomal RNA and is necessary for the in vitro assembly process of the 50S ribosomal subunit. It is not involved in the protein synthesizing functions of that subunit. This is Large ribosomal subunit protein bL20 from Tolumonas auensis (strain DSM 9187 / NBRC 110442 / TA 4).